Here is a 216-residue protein sequence, read N- to C-terminus: Cytidylate kinase (216 aa).

ATP is bound at residue 10-18 (GPAAAGKST).

The protein belongs to the cytidylate kinase family. Type 1 subfamily.

Its subcellular location is the cytoplasm. The enzyme catalyses CMP + ATP = CDP + ADP. It catalyses the reaction dCMP + ATP = dCDP + ADP. This Macrococcus caseolyticus (strain JCSC5402) (Macrococcoides caseolyticum) protein is Cytidylate kinase.